The sequence spans 229 residues: MNIKAPVITIDGPSGSGKGTIAGILAKRLGWCLLDSGALYRLLAFAARNHGVDLTNEESLKLLAAHLDVQFVGATEGHPQRIILEGDDVTDDLRNEQVGSWASQVAALPAVRDALLQRQRAFQEPPGLVADGRDMGTVVFPEAPLKIFLTASAEERARRRYLQLKGKVDGVSLSSLLDEIRARDERDTQRAVAPLKPAADAIQLDSTELSIEQVLERIMSEIAIRDIAG.

Position 12–20 (12–20 (GPSGSGKGT)) interacts with ATP.

The protein belongs to the cytidylate kinase family. Type 1 subfamily.

It is found in the cytoplasm. It catalyses the reaction CMP + ATP = CDP + ADP. It carries out the reaction dCMP + ATP = dCDP + ADP. The chain is Cytidylate kinase from Pseudomonas fluorescens (strain SBW25).